Here is a 90-residue protein sequence, read N- to C-terminus: Exodeoxyribonuclease 7 small subunit (90 aa).

Residues 62–90 (QDGQANPMSSQGHTAGEYPDDEAEEAEEA) form a disordered region. A compositionally biased stretch (polar residues) spans 64–74 (GQANPMSSQGH). The segment covering 79-90 (YPDDEAEEAEEA) has biased composition (acidic residues).

This sequence belongs to the XseB family. In terms of assembly, heterooligomer composed of large and small subunits.

It is found in the cytoplasm. The catalysed reaction is Exonucleolytic cleavage in either 5'- to 3'- or 3'- to 5'-direction to yield nucleoside 5'-phosphates.. Functionally, bidirectionally degrades single-stranded DNA into large acid-insoluble oligonucleotides, which are then degraded further into small acid-soluble oligonucleotides. This is Exodeoxyribonuclease 7 small subunit from Desulfovibrio desulfuricans (strain ATCC 27774 / DSM 6949 / MB).